The primary structure comprises 345 residues: Anthranilate phosphoribosyltransferase (345 aa).

5-phospho-alpha-D-ribose 1-diphosphate contacts are provided by residues glycine 79, 82–83, threonine 87, 89–92, 106–114, and serine 118; these read GD, NVST, and KHGNRAVSG. Position 79 (glycine 79) interacts with anthranilate. Serine 91 lines the Mg(2+) pocket. Anthranilate is bound at residue asparagine 109. Arginine 164 is a binding site for anthranilate. Mg(2+)-binding residues include aspartate 223 and glutamate 224.

Belongs to the anthranilate phosphoribosyltransferase family. In terms of assembly, homodimer. The cofactor is Mg(2+).

The enzyme catalyses N-(5-phospho-beta-D-ribosyl)anthranilate + diphosphate = 5-phospho-alpha-D-ribose 1-diphosphate + anthranilate. It participates in amino-acid biosynthesis; L-tryptophan biosynthesis; L-tryptophan from chorismate: step 2/5. Catalyzes the transfer of the phosphoribosyl group of 5-phosphorylribose-1-pyrophosphate (PRPP) to anthranilate to yield N-(5'-phosphoribosyl)-anthranilate (PRA). The chain is Anthranilate phosphoribosyltransferase from Saccharolobus islandicus (strain L.S.2.15 / Lassen #1) (Sulfolobus islandicus).